The primary structure comprises 239 residues: tRNA (guanine-N(1)-)-methyltransferase (239 aa).

Residues G110 and 129 to 134 (LGDFVL) contribute to the S-adenosyl-L-methionine site.

The protein belongs to the RNA methyltransferase TrmD family. As to quaternary structure, homodimer.

The protein resides in the cytoplasm. The catalysed reaction is guanosine(37) in tRNA + S-adenosyl-L-methionine = N(1)-methylguanosine(37) in tRNA + S-adenosyl-L-homocysteine + H(+). Specifically methylates guanosine-37 in various tRNAs. In Clostridium beijerinckii (strain ATCC 51743 / NCIMB 8052) (Clostridium acetobutylicum), this protein is tRNA (guanine-N(1)-)-methyltransferase.